We begin with the raw amino-acid sequence, 280 residues long: Pantothenate synthetase (280 aa).

An ATP-binding site is contributed by 31 to 38; sequence MGNLHAGH. Histidine 38 functions as the Proton donor in the catalytic mechanism. Residue glutamine 62 participates in (R)-pantoate binding. Glutamine 62 contacts beta-alanine. 150–153 contributes to the ATP binding site; sequence GKKD. A (R)-pantoate-binding site is contributed by glutamine 156. Residues valine 179 and 187 to 190 each bind ATP; that span reads MSSR.

The protein belongs to the pantothenate synthetase family. Homodimer.

It is found in the cytoplasm. The catalysed reaction is (R)-pantoate + beta-alanine + ATP = (R)-pantothenate + AMP + diphosphate + H(+). The protein operates within cofactor biosynthesis; (R)-pantothenate biosynthesis; (R)-pantothenate from (R)-pantoate and beta-alanine: step 1/1. Catalyzes the condensation of pantoate with beta-alanine in an ATP-dependent reaction via a pantoyl-adenylate intermediate. This Xanthomonas euvesicatoria pv. vesicatoria (strain 85-10) (Xanthomonas campestris pv. vesicatoria) protein is Pantothenate synthetase.